A 283-amino-acid chain; its full sequence is Nucleotide-binding protein Sama_3091 (283 aa).

8-15 contributes to the ATP binding site; sequence GRSGSGKS. A GTP-binding site is contributed by 56 to 59; that stretch reads DIRN.

Belongs to the RapZ-like family.

Its function is as follows. Displays ATPase and GTPase activities. The protein is Nucleotide-binding protein Sama_3091 of Shewanella amazonensis (strain ATCC BAA-1098 / SB2B).